The sequence spans 198 residues: DnaJ homolog subfamily C member 12 (198 aa).

Position 1 is an N-acetylmethionine (M1). The J domain maps to 14 to 79 (DYYTLLGCDE…ESRARYDHWR (66 aa)). Basic and acidic residues predominate over residues 114–156 (EESDKTHTTKMENEECNEQRERKKEELASTAEKTEQKEPKPLE). The segment at 114-169 (EESDKTHTTKMENEECNEQRERKKEELASTAEKTEQKEPKPLEKSVSPQNSDSSGF) is disordered. 3 positions are modified to phosphoserine: S160, S166, and S182.

Interacts with HSPA8. Interacts with TPH1. Interacts with TPH2. In terms of tissue distribution, expressed at high levels in brain, heart, and testis, and at reduced levels in kidney and stomach.

Its subcellular location is the cytoplasm. In terms of biological role, probable co-chaperone that participates in the proper folding of biopterin-dependent aromatic amino acid hydroxylases, which include phenylalanine-4-hydroxylase (PAH), tyrosine 3-monooxygenase (TH) and peripheral and neuronal tryptophan hydroxylases (TPH1 and TPH2). The polypeptide is DnaJ homolog subfamily C member 12 (DNAJC12) (Homo sapiens (Human)).